A 136-amino-acid chain; its full sequence is Small ribosomal subunit protein uS19 (136 aa).

The interval 117-136 is disordered; that stretch reads VQHGDPGMGATRSSMFVPLK.

It belongs to the universal ribosomal protein uS19 family.

Its function is as follows. Protein S19 forms a complex with S13 that binds strongly to the 16S ribosomal RNA. In Methanobrevibacter smithii (strain ATCC 35061 / DSM 861 / OCM 144 / PS), this protein is Small ribosomal subunit protein uS19.